We begin with the raw amino-acid sequence, 707 residues long: Elongation factor G (707 aa).

The tr-type G domain occupies 9 to 293 (HDVRNIGIMA…GVVDYLPSPE (285 aa)). Residues 18–25 (AHIDAGKT), 90–94 (DTPGH), and 144–147 (NKMD) each bind GTP.

It belongs to the TRAFAC class translation factor GTPase superfamily. Classic translation factor GTPase family. EF-G/EF-2 subfamily.

The protein localises to the cytoplasm. Catalyzes the GTP-dependent ribosomal translocation step during translation elongation. During this step, the ribosome changes from the pre-translocational (PRE) to the post-translocational (POST) state as the newly formed A-site-bound peptidyl-tRNA and P-site-bound deacylated tRNA move to the P and E sites, respectively. Catalyzes the coordinated movement of the two tRNA molecules, the mRNA and conformational changes in the ribosome. In Bifidobacterium longum (strain DJO10A), this protein is Elongation factor G.